The sequence spans 461 residues: Cysteine--tRNA ligase (461 aa).

Residue Cys-30 coordinates Zn(2+). The short motif at 32–42 (VTVYDLCHIGH) is the 'HIGH' region element. Positions 211, 236, and 240 each coordinate Zn(2+). A 'KMSKS' region motif is present at residues 268–272 (KMSKS). Residue Lys-271 coordinates ATP.

This sequence belongs to the class-I aminoacyl-tRNA synthetase family. Monomer. The cofactor is Zn(2+).

The protein resides in the cytoplasm. It catalyses the reaction tRNA(Cys) + L-cysteine + ATP = L-cysteinyl-tRNA(Cys) + AMP + diphosphate. In Shewanella sp. (strain MR-4), this protein is Cysteine--tRNA ligase.